We begin with the raw amino-acid sequence, 165 residues long: Type VI lipase immunity protein Tli3 (165 aa).

A signal peptide spans 1–21; sequence MKCKTLLIACLFGLGSAQALA.

Interacts with the Tle3 toxin.

The protein localises to the periplasm. Its function is as follows. Immunity protein that neutralizes the toxicity of the P.aeruginosa antibacterial toxin Tle3 in the periplasm to protect the cell from fratricide intoxication. The protein is Type VI lipase immunity protein Tli3 of Pseudomonas aeruginosa (strain ATCC 15692 / DSM 22644 / CIP 104116 / JCM 14847 / LMG 12228 / 1C / PRS 101 / PAO1).